The chain runs to 380 residues: Lipid-A-disaccharide synthase (380 aa).

It belongs to the LpxB family.

The enzyme catalyses a lipid X + a UDP-2-N,3-O-bis[(3R)-3-hydroxyacyl]-alpha-D-glucosamine = a lipid A disaccharide + UDP + H(+). The protein operates within bacterial outer membrane biogenesis; LPS lipid A biosynthesis. In terms of biological role, condensation of UDP-2,3-diacylglucosamine and 2,3-diacylglucosamine-1-phosphate to form lipid A disaccharide, a precursor of lipid A, a phosphorylated glycolipid that anchors the lipopolysaccharide to the outer membrane of the cell. The sequence is that of Lipid-A-disaccharide synthase from Azotobacter vinelandii (strain DJ / ATCC BAA-1303).